Consider the following 640-residue polypeptide: Threonine--tRNA ligase (640 aa).

Positions 1-61 (MPIITLPNGD…TEDSTLQIIT (61 aa)) constitute a TGS domain. Positions 242-533 (DHRKIGKALD…LIEHYAGFMP (292 aa)) are catalytic. Cys333, His384, and His510 together coordinate Zn(2+).

It belongs to the class-II aminoacyl-tRNA synthetase family. As to quaternary structure, homodimer. Requires Zn(2+) as cofactor.

It localises to the cytoplasm. The enzyme catalyses tRNA(Thr) + L-threonine + ATP = L-threonyl-tRNA(Thr) + AMP + diphosphate + H(+). In terms of biological role, catalyzes the attachment of threonine to tRNA(Thr) in a two-step reaction: L-threonine is first activated by ATP to form Thr-AMP and then transferred to the acceptor end of tRNA(Thr). Also edits incorrectly charged L-seryl-tRNA(Thr). The sequence is that of Threonine--tRNA ligase from Acinetobacter baumannii (strain AB307-0294).